Here is a 247-residue protein sequence, read N- to C-terminus: DNA repair protein RecO (247 aa).

The protein belongs to the RecO family.

Functionally, involved in DNA repair and RecF pathway recombination. This is DNA repair protein RecO from Methylocella silvestris (strain DSM 15510 / CIP 108128 / LMG 27833 / NCIMB 13906 / BL2).